The primary structure comprises 590 residues: Nuclear receptor subfamily 2 group C member 1 (590 aa).

Residues 1–166 (MATIEEIAHQ…RLQRCIAFGM (166 aa)) form a required for interaction with KAT2B region. A DNA-binding region (nuclear receptor) is located at residues 98–173 (FDLCVVCGDK…FGMKQDSVQC (76 aa)). 2 NR C4-type zinc fingers span residues 101–121 (CVVC…CEGC) and 137–156 (CRGS…CQYC). Ser-185 and Ser-203 each carry phosphoserine. Thr-208 bears the Phosphothreonine mark. Thr-210 carries the post-translational modification Phosphothreonine; by MAPK1. Lys-238 is covalently cross-linked (Glycyl lysine isopeptide (Lys-Gly) (interchain with G-Cter in SUMO); alternate). Lys-238 is covalently cross-linked (Glycyl lysine isopeptide (Lys-Gly) (interchain with G-Cter in SUMO2); alternate). Residues 333–577 (ESMEGSTHLI…SVIPHILKME (245 aa)) form the NR LBD domain. Ser-568 bears the Phosphoserine; by PKC mark. The tract at residues 571 to 590 (PHILKMEPADYNSQIIGHSL) is required for interaction with NRIP1. Lys-575 is covalently cross-linked (Glycyl lysine isopeptide (Lys-Gly) (interchain with G-Cter in SUMO2)).

The protein belongs to the nuclear hormone receptor family. NR2 subfamily. In terms of assembly, homodimer. Heterodimer; with NR2C2 which is required for chromatin remodeling and for binding to promoter regions such as globin DR1 repeats. Interacts with ESR1; the interaction prevents homodimerization of ESR1 and suppresses its transcriptional activity and cell growth. Interacts with NRIP1 (via its LXXLL motifs); the interaction provides corepressor activity. Interacts with HDAC3 (via the DNA-binding domain); the interaction recruits phosphorylated NR2C1 to PML bodies for sumoylation. Interacts with HDAC4 (via the DNA-binding domain). Interacts with PIAS1; the interaction is required for sumoylation of NR2C1. Interacts with UBE2I; the interaction is required for sumoylation of NR2C1. Interacts with KAT2B; the interaction acts as a corepressor of gene expression. In terms of processing, sumoylation requires both PIAS1 and UBE2I. Sumoylation appears to dissociate NR2C1 from the PML nuclear bodies. Enhances the interaction with NRIP1 but inhibits interaction with KAT2B. In proliferating cells, stimulation by all-trans retinoic acid, activation of MAPK1-mediated phosphorylation and recruitment to PML bodies with subsequent sumoylation, suppresses OCT4 expression. Phosphorylated on several serine and threonine residues. Phosphorylation on Thr-210, stimulated by all-trans retinoic acid (atRA) mediates PML location and sumoylation in proliferating cells which then modulates its association with effector molecules, KAT2B and NRIP1. Phosphorylation on Ser-568 by PKC is important for protein stability and function as activator of RARB.

The protein localises to the nucleus. It localises to the PML body. Its function is as follows. Orphan nuclear receptor. Binds the IR7 element in the promoter of its own gene in an autoregulatory negative feedback mechanism. Primarily repressor of a broad range of genes including ESR1 and RARB. Together with NR2C2, forms the core of the DRED (direct repeat erythroid-definitive) complex that represses embryonic and fetal globin transcription. Binds to hormone response elements (HREs) consisting of two 5'-AGGTCA-3' half site direct repeat consensus sequences. Also activator of OCT4 gene expression. Plays a fundamental role in early embryogenesis and regulates embryonic stem cell proliferation and differentiation. Mediator of retinoic acid-regulated preadipocyte proliferation. In Rattus norvegicus (Rat), this protein is Nuclear receptor subfamily 2 group C member 1 (Nr2c1).